A 545-amino-acid chain; its full sequence is Lysine--tRNA ligase (545 aa).

Positions 42 to 50 (PSGVPHIGH) match the 'HIGH' region motif. The short motif at 307 to 311 (PLSSS) is the 'KMSKS' region element.

This sequence belongs to the class-I aminoacyl-tRNA synthetase family.

It is found in the cytoplasm. It carries out the reaction tRNA(Lys) + L-lysine + ATP = L-lysyl-tRNA(Lys) + AMP + diphosphate. This chain is Lysine--tRNA ligase, found in Haloarcula marismortui (strain ATCC 43049 / DSM 3752 / JCM 8966 / VKM B-1809) (Halobacterium marismortui).